The following is a 343-amino-acid chain: Small ribosomal subunit biogenesis GTPase RsgA (343 aa).

Residues 116 to 275 (RGQLKPVAAN…LIDSPGIREF (160 aa)) form the CP-type G domain. Residues 163-166 (NKAD) and 217-225 (GQSGVGKSS) each bind GTP. 4 residues coordinate Zn(2+): cysteine 299, cysteine 304, histidine 306, and cysteine 312.

It belongs to the TRAFAC class YlqF/YawG GTPase family. RsgA subfamily. As to quaternary structure, monomer. Associates with 30S ribosomal subunit, binds 16S rRNA. Requires Zn(2+) as cofactor.

The protein resides in the cytoplasm. In terms of biological role, one of several proteins that assist in the late maturation steps of the functional core of the 30S ribosomal subunit. Helps release RbfA from mature subunits. May play a role in the assembly of ribosomal proteins into the subunit. Circularly permuted GTPase that catalyzes slow GTP hydrolysis, GTPase activity is stimulated by the 30S ribosomal subunit. This is Small ribosomal subunit biogenesis GTPase RsgA from Pseudomonas syringae pv. tomato (strain ATCC BAA-871 / DC3000).